The chain runs to 455 residues: L-serine dehydratase 2 (455 aa).

Belongs to the iron-sulfur dependent L-serine dehydratase family. [4Fe-4S] cluster is required as a cofactor. Activated by post-translational modification by a system involving at least three gene products. Activation is mimicked in vitro by iron and dithiothreitol. There is considerable evidence for a free-radical activation mechanism.

The enzyme catalyses L-serine = pyruvate + NH4(+). Its pathway is carbohydrate biosynthesis; gluconeogenesis. Also deaminates threonine, particularly when it is present in high concentration. This Escherichia coli (strain K12) protein is L-serine dehydratase 2 (sdaB).